Here is a 300-residue protein sequence, read N- to C-terminus: Ribonuclease HIII (300 aa).

An RNase H type-2 domain is found at 83 to 300; the sequence is IPIIGSDEVG…THKAQALLTK (218 aa). Residues D89, E90, and D194 each coordinate a divalent metal cation.

Belongs to the RNase HII family. RnhC subfamily. Requires Mn(2+) as cofactor. Mg(2+) serves as cofactor.

It localises to the cytoplasm. It catalyses the reaction Endonucleolytic cleavage to 5'-phosphomonoester.. Its function is as follows. Endonuclease that specifically degrades the RNA of RNA-DNA hybrids. This is Ribonuclease HIII from Streptococcus pyogenes serotype M49 (strain NZ131).